Consider the following 447-residue polypeptide: Argininosuccinate synthase (447 aa).

ATP is bound by residues 17–25 and alanine 43; that span reads AFSGGLDTS. Tyrosine 99 contributes to the L-citrulline binding site. ATP is bound by residues glycine 129 and threonine 131. Residues threonine 131, asparagine 135, and aspartate 136 each coordinate L-aspartate. L-citrulline is bound at residue asparagine 135. ATP is bound at residue aspartate 136. Residues arginine 139 and serine 192 each contribute to the L-citrulline site. Aspartate 194 provides a ligand contact to ATP. Residues threonine 201, glutamate 203, and glutamate 280 each coordinate L-citrulline.

This sequence belongs to the argininosuccinate synthase family. Type 2 subfamily. Homotetramer.

It localises to the cytoplasm. The catalysed reaction is L-citrulline + L-aspartate + ATP = 2-(N(omega)-L-arginino)succinate + AMP + diphosphate + H(+). Its pathway is amino-acid biosynthesis; L-arginine biosynthesis; L-arginine from L-ornithine and carbamoyl phosphate: step 2/3. In Escherichia coli O157:H7, this protein is Argininosuccinate synthase (argG).